The following is a 63-amino-acid chain: Bucandin (63 aa).

5 disulfide bridges follow: cysteine 3–cysteine 24, cysteine 6–cysteine 11, cysteine 17–cysteine 39, cysteine 43–cysteine 55, and cysteine 56–cysteine 61.

In terms of tissue distribution, expressed by the venom gland.

Its subcellular location is the secreted. Its function is as follows. This toxin is described as enhancing presynaptic acetylcholine release, but neither experimental results, nor references to other sources are available. In Bungarus candidus (Malayan krait), this protein is Bucandin.